Consider the following 515-residue polypeptide: Maturase K (515 aa).

The protein belongs to the intron maturase 2 family. MatK subfamily.

The protein localises to the plastid. It is found in the chloroplast. Its function is as follows. Usually encoded in the trnK tRNA gene intron. Probably assists in splicing its own and other chloroplast group II introns. The polypeptide is Maturase K (Pinus densiflora (Japanese red pine)).